The sequence spans 182 residues: Trypsin inhibitor 2 (182 aa).

At Gln-1 the chain carries Pyrrolidone carboxylic acid. 2 disulfides stabilise this stretch: Cys-40–Cys-84 and Cys-136–Cys-147.

The protein belongs to the protease inhibitor I3 (leguminous Kunitz-type inhibitor) family.

This is Trypsin inhibitor 2 from Psophocarpus tetragonolobus (Winged bean).